We begin with the raw amino-acid sequence, 525 residues long: Vesicular inhibitory amino acid transporter (525 aa).

The Cytoplasmic segment spans residues 1-132; sequence MATLLRSKLT…WNVTNAIQGM (132 aa). A helical membrane pass occupies residues 133 to 153; the sequence is FVLGLPYAILHGGYLGLFLII. At 154 to 204 the chain is on the lumenal, vesicle side; it reads FAAVVCCYTGKILIACLYEENEDGEVVRVRDSYVAIANACCAPRFPTLGGR. Tyr-186 is modified (3'-nitrotyrosine). Residues 205 to 225 traverse the membrane as a helical segment; it reads VVNVAQIIELVMTCILYVVVS. At 226–265 the chain is on the cytoplasmic side; that stretch reads GNLMYNSFPGLPVSQKSWSIIATAVLLPCAFLKNLKAVSK. The chain crosses the membrane as a helical span at residues 266 to 286; that stretch reads FSLLCTLAHFVINILVIAYCL. At 287–305 the chain is on the lumenal, vesicle side; the sequence is SRARDWAWEKVKFYIDVKK. Residues 306 to 326 traverse the membrane as a helical segment; it reads FPISIGIIVFSYTSQIFLPSL. Over 327 to 341 the chain is Cytoplasmic; it reads EGNMQQPSEFHCMMN. Residues 342 to 362 form a helical membrane-spanning segment; it reads WTHIAACVLKGLFALVAYLTW. Residues 363 to 383 lie on the Lumenal, vesicle side of the membrane; it reads ADETKEVITDNLPGSIRAVVN. The chain crosses the membrane as a helical span at residues 384-404; that stretch reads LFLVAKALLSYPLPFFAAVEV. Over 405 to 438 the chain is Cytoplasmic; that stretch reads LEKSLFQEGSRAFFPACYGGDGRLKSWGLTLRCA. Residues 439-459 form a helical membrane-spanning segment; that stretch reads LVVFTLLMAIYVPHFALLMGL. Over 460-461 the chain is Lumenal, vesicle; that stretch reads TG. A helical transmembrane segment spans residues 462-482; that stretch reads SLTGAGLCFLLPSLFHLRLLW. At 483–489 the chain is on the cytoplasmic side; that stretch reads RKLLWHQ. Residues 490-510 form a helical membrane-spanning segment; it reads VFFDVAIFVIGGICSVSGFVH. The Lumenal, vesicle segment spans residues 511 to 525; sequence SLEGLIEAYRTNAED.

Belongs to the amino acid/polyamine transporter 2 family. Brain and retina. Localized in horizontal cell tips at both rod and cone terminals.

The protein resides in the cytoplasmic vesicle membrane. It is found in the presynapse. It catalyses the reaction 4-aminobutanoate(out) + n H(+)(in) = 4-aminobutanoate(in) + n H(+)(out). The enzyme catalyses glycine(out) + n H(+)(in) = glycine(in) + n H(+)(out). The catalysed reaction is beta-alanine(out) + n H(+)(in) = beta-alanine(in) + n H(+)(out). Chloride ions activate 4-aminobutanoate/H(+) transport. Functionally, antiporter that exchanges vesicular protons for cytosolic 4-aminobutanoate or to a lesser extend glycine, thus allowing their secretion from nerve terminals. The transport is equally dependent on the chemical and electrical components of the proton gradient. May also transport beta-alanine. Acidification of GABAergic synaptic vesicles is a prerequisite for 4-aminobutanoate uptake. This Mus musculus (Mouse) protein is Vesicular inhibitory amino acid transporter.